The sequence spans 399 residues: Elongation factor Tu (399 aa).

A tr-type G domain is found at 10 to 209; the sequence is KPHVNIGTIG…AVDDYIPTPV (200 aa). The tract at residues 19-26 is G1; that stretch reads GHVDHGKT. 19–26 lines the GTP pocket; it reads GHVDHGKT. T26 provides a ligand contact to Mg(2+). Residues 62–66 are G2; that stretch reads GITIN. Residues 83–86 form a G3 region; it reads DCPG. GTP-binding positions include 83–87 and 138–141; these read DCPGH and NKCD. The G4 stretch occupies residues 138–141; that stretch reads NKCD. Residues 175-177 form a G5 region; sequence SAY.

Belongs to the TRAFAC class translation factor GTPase superfamily. Classic translation factor GTPase family. EF-Tu/EF-1A subfamily. In terms of assembly, monomer.

It localises to the cytoplasm. It catalyses the reaction GTP + H2O = GDP + phosphate + H(+). Its function is as follows. GTP hydrolase that promotes the GTP-dependent binding of aminoacyl-tRNA to the A-site of ribosomes during protein biosynthesis. This Bifidobacterium longum (strain DJO10A) protein is Elongation factor Tu.